The sequence spans 293 residues: Elongation factor Ts (293 aa).

The segment at 80–83 (TDFV) is involved in Mg(2+) ion dislocation from EF-Tu.

The protein belongs to the EF-Ts family.

The protein localises to the cytoplasm. Associates with the EF-Tu.GDP complex and induces the exchange of GDP to GTP. It remains bound to the aminoacyl-tRNA.EF-Tu.GTP complex up to the GTP hydrolysis stage on the ribosome. In Paraburkholderia xenovorans (strain LB400), this protein is Elongation factor Ts.